Reading from the N-terminus, the 508-residue chain is Adenosine deaminase (508 aa).

The signal sequence occupies residues 1-18 (MFSQLVVWLLATSTVCLA).

Belongs to the metallo-dependent hydrolases superfamily. Adenosine and AMP deaminases family. ADGF subfamily. Requires Zn(2+) as cofactor. Salivary gland (at protein level).

It is found in the secreted. The catalysed reaction is adenosine + H2O + H(+) = inosine + NH4(+). In terms of biological role, catalyzes the deamination of adenosine to inosine. This is Adenosine deaminase from Lutzomyia longipalpis (Sand fly).